We begin with the raw amino-acid sequence, 243 residues long: NifU-like scaffold protein (243 aa).

The protein belongs to the NifU family. Homodimer.

The protein resides in the plastid. Its subcellular location is the apicoplast. Its pathway is cofactor biosynthesis; iron-sulfur cluster biosynthesis. Binds and transfers [4Fe-4S] iron-sulfur clusters to target proteins. This Plasmodium berghei (strain Anka) protein is NifU-like scaffold protein.